The following is a 129-amino-acid chain: MKLFTGLIFCSLVLGVSSQWYSFIGEAAQGAWDMYRAYSDMIEAKYKNSDKYFHARGNYDAAQRGPGGAWAAKVISDARERSQRITDLIKYGDSGHGVEDSKADQAANEWGRSGKDPNHFRPPGLPDKY.

Positions Met-1–Ser-18 are cleaved as a signal peptide. Residues Gln-19–Ala-44 are important for amyloid formation. The interval Gly-92 to Tyr-129 is disordered.

The protein belongs to the SAA family. In terms of assembly, homohexamer; dimer of trimers. Can form amyloid fibrils after partial proteolysis; the native, undenatured protein does not form amyloid fibrils (in vitro). Apolipoprotein of the HDL complex. Binds to heparin. In terms of tissue distribution, detected in liver.

It localises to the secreted. Functionally, major acute phase protein. The polypeptide is Serum amyloid A-1 protein (SAA1) (Neovison vison (American mink)).